The primary structure comprises 81 residues: Large ribosomal subunit protein bL31B (81 aa).

It belongs to the bacterial ribosomal protein bL31 family. Type B subfamily. In terms of assembly, part of the 50S ribosomal subunit.

In Cutibacterium acnes (strain DSM 16379 / KPA171202) (Propionibacterium acnes), this protein is Large ribosomal subunit protein bL31B.